Here is a 132-residue protein sequence, read N- to C-terminus: Small ribosomal subunit protein uS11 (132 aa).

Belongs to the universal ribosomal protein uS11 family. Part of the 30S ribosomal subunit. Interacts with proteins S7 and S18. Binds to IF-3.

Functionally, located on the platform of the 30S subunit, it bridges several disparate RNA helices of the 16S rRNA. Forms part of the Shine-Dalgarno cleft in the 70S ribosome. This Alcanivorax borkumensis (strain ATCC 700651 / DSM 11573 / NCIMB 13689 / SK2) protein is Small ribosomal subunit protein uS11.